Consider the following 374-residue polypeptide: DNA-directed RNA polymerase subunit alpha (374 aa).

Residues 1–257 form an alpha N-terminal domain (alpha-NTD) region; sequence MSDNAHNLLY…KHFSIFENMD (257 aa). The segment at 274-374 is alpha C-terminal domain (alpha-CTD); that stretch reads KDDILHKLIL…EKIRAKNIKG (101 aa).

This sequence belongs to the RNA polymerase alpha chain family. As to quaternary structure, homodimer. The RNAP catalytic core consists of 2 alpha, 1 beta, 1 beta' and 1 omega subunit. When a sigma factor is associated with the core the holoenzyme is formed, which can initiate transcription.

It catalyses the reaction RNA(n) + a ribonucleoside 5'-triphosphate = RNA(n+1) + diphosphate. Functionally, DNA-dependent RNA polymerase catalyzes the transcription of DNA into RNA using the four ribonucleoside triphosphates as substrates. The chain is DNA-directed RNA polymerase subunit alpha from Chlamydia pneumoniae (Chlamydophila pneumoniae).